Reading from the N-terminus, the 846-residue chain is Protein IRS1 (846 aa).

4 disordered regions span residues 1–82 (MAQR…NFWH), 366–385 (TGTAAGTTSPPAASGTETEA), 606–626 (WLMEQPPPPSRQTKPDAATMP), and 714–846 (QVIP…HVHH). The span at 16–25 (RGRGAGGPSG) shows a compositional bias: gly residues. The segment covering 26 to 56 (VGSSPPSSCVPMGAPSTAGTGASAAATTTPG) has biased composition (low complexity). Over residues 722 to 732 (EPEDDDEDPTY) the composition is skewed to acidic residues. Residues 832–846 (RPKKCQTHAPHHVHH) show a composition bias toward basic residues.

The protein belongs to the herpesviridae US22 family. As to quaternary structure, interacts (via N-terminus) with the viral DNA polymerase accessory subunit UL44. Interacts (via C-terminus) with host EIF2AK2/PKR.

The protein resides in the virion. It is found in the host cytoplasm. The protein localises to the host nucleus. Its function is as follows. Inhibits the establishment of the antiviral state in the infected cell. Prevents the phosphorylation of the host eukaryotic translation initiation factor eIF-2alpha and thus the shutoff of viral and cellular protein synthesis by directly interacting with EIF2AK2/PKR. May also participate in viral DNA replication by interacting with the DNA polymerase accessory protein and the lytic origin of replication, oriLyt. In Homo sapiens (Human), this protein is Protein IRS1 (IRS1).